The sequence spans 162 residues: Peptidyl-prolyl cis-trans isomerase (162 aa).

Position 2 is an N-acetylserine (Ser-2). One can recognise a PPIase cyclophilin-type domain in the interval 5–161 (YFDVEADGQP…ARIVVAKSGE (157 aa)). Residues Lys-29 and Lys-42 each participate in a glycyl lysine isopeptide (Lys-Gly) (interchain with G-Cter in ubiquitin) cross-link. Thr-71 is modified (phosphothreonine). Glycyl lysine isopeptide (Lys-Gly) (interchain with G-Cter in ubiquitin) cross-links involve residues Lys-123 and Lys-139. Residues Ser-142 and Ser-145 each carry the phosphoserine modification. Glycyl lysine isopeptide (Lys-Gly) (interchain with G-Cter in ubiquitin) cross-links involve residues Lys-151 and Lys-158.

The protein belongs to the cyclophilin-type PPIase family. PPIase A subfamily. As to quaternary structure, interacts with a complex composed of SIN3 and RPD3. Identified in the Set3C complex with HOS2, HST1, SNT1, SIF2, HOS4/YIL112W and SET3.

The protein resides in the cytoplasm. It is found in the nucleus. It localises to the mitochondrion intermembrane space. It carries out the reaction [protein]-peptidylproline (omega=180) = [protein]-peptidylproline (omega=0). Binds cyclosporin A (CsA). CsA mediates some of its effects via an inhibitory action on PPIase. In terms of biological role, PPIases accelerate the folding of proteins. It catalyzes the cis-trans isomerization of proline imidic peptide bonds in oligopeptides. Involved in histone deacetylase complexes, suggesting a function in chromatin. Imports fructose-1,6-bisphosphatase (FBPase) into the intermediate vacuole import and degradation (Vid) vesicles. Regulates the meiotic gene program via the Set3C histone deacetylase complex to promote efficient sporulation, and the prolyl-isomerase activity is required for this function. The sequence is that of Peptidyl-prolyl cis-trans isomerase (CPR1) from Saccharomyces cerevisiae (strain ATCC 204508 / S288c) (Baker's yeast).